The following is a 741-amino-acid chain: Catalase-peroxidase (741 aa).

A cross-link (tryptophyl-tyrosyl-methioninium (Trp-Tyr) (with M-234)) is located at residues 86 to 208 (WHSAGSYRIF…FAATEMGLIY (123 aa)). His-87 acts as the Proton acceptor in catalysis. The segment at residues 208-234 (YVNPEGPGGNPDPLGSAQEIRVAFRRM) is a cross-link (tryptophyl-tyrosyl-methioninium (Tyr-Met) (with W-86)). His-249 is a heme b binding site.

It belongs to the peroxidase family. Peroxidase/catalase subfamily. In terms of assembly, homodimer or homotetramer. Heme b serves as cofactor. In terms of processing, formation of the three residue Trp-Tyr-Met cross-link is important for the catalase, but not the peroxidase activity of the enzyme.

The enzyme catalyses H2O2 + AH2 = A + 2 H2O. It catalyses the reaction 2 H2O2 = O2 + 2 H2O. Functionally, bifunctional enzyme with both catalase and broad-spectrum peroxidase activity. Also displays NADH oxidase, INH lyase and isonicotinoyl-NAD synthase activities. The protein is Catalase-peroxidase of Archaeoglobus fulgidus (strain ATCC 49558 / DSM 4304 / JCM 9628 / NBRC 100126 / VC-16).